A 93-amino-acid polypeptide reads, in one-letter code: Small ribosomal subunit protein uS19 (93 aa).

Belongs to the universal ribosomal protein uS19 family.

Functionally, protein S19 forms a complex with S13 that binds strongly to the 16S ribosomal RNA. The sequence is that of Small ribosomal subunit protein uS19 from Latilactobacillus sakei subsp. sakei (strain 23K) (Lactobacillus sakei subsp. sakei).